The chain runs to 303 residues: MMKMNTGTSPSVIGGGTSGNEWESRPGGMVVQRRTDQNSDVPRVFRVRVKYGSVYHEININSQSSFGELKKMLSDQVGLHHEDMKVLYKDKERDSKMFLDLCGVKDRSKLVVKEDPISQEKRLLAKRKNAAIEKASKSISDISFEVDRLAGQVSAFETVINKGGKVEEKSLVNLIEMLMNQLLRLDAIIADGDVKLMRKMQVQRVQKYVEALDLLKVKNSAKKVEVNKSVRHKPQTQTRFEQRDLLSFVEEEEEEPRNSNASSSSGTPAVVASKWEMFDSASTAKAAETVKPVPPRFKWEFFD.

The segment covering 1-11 (MMKMNTGTSPS) has biased composition (polar residues). The segment at 1–27 (MMKMNTGTSPSVIGGGTSGNEWESRPG) is disordered. Residues 45–119 (FRVRVKYGSV…LVVKEDPISQ (75 aa)) enclose the Ubiquitin-like domain. A BAG domain is found at 138–216 (SISDISFEVD…KYVEALDLLK (79 aa)). The interval 249-268 (VEEEEEEPRNSNASSSSGTP) is disordered. The span at 258–267 (NSNASSSSGT) shows a compositional bias: polar residues. Ser263 is modified (phosphoserine).

As to quaternary structure, binds to the ATPase domain of HSP70/HSC70 chaperones. Interacts with HSP70-1.

Its function is as follows. Co-chaperone that regulates diverse cellular pathways, such as programmed cell death and stress responses. The polypeptide is BAG family molecular chaperone regulator 3 (BAG3) (Arabidopsis thaliana (Mouse-ear cress)).